Reading from the N-terminus, the 346-residue chain is Phosphoribosylformylglycinamidine cyclo-ligase (346 aa).

The protein belongs to the AIR synthase family.

The protein localises to the cytoplasm. The catalysed reaction is 2-formamido-N(1)-(5-O-phospho-beta-D-ribosyl)acetamidine + ATP = 5-amino-1-(5-phospho-beta-D-ribosyl)imidazole + ADP + phosphate + H(+). It participates in purine metabolism; IMP biosynthesis via de novo pathway; 5-amino-1-(5-phospho-D-ribosyl)imidazole from N(2)-formyl-N(1)-(5-phospho-D-ribosyl)glycinamide: step 2/2. In Prochlorococcus marinus (strain NATL2A), this protein is Phosphoribosylformylglycinamidine cyclo-ligase.